The sequence spans 789 residues: Protein translocase subunit SecA 2 (789 aa).

ATP contacts are provided by residues Gln-79, 97-101, and Asp-487; that span reads GEGKT.

Belongs to the SecA family. As to quaternary structure, monomer and homodimer. Part of the essential Sec protein translocation apparatus which comprises SecA, SecYEG and auxiliary proteins SecDF. Other proteins may also be involved.

It localises to the cell membrane. It is found in the cytoplasm. The enzyme catalyses ATP + H2O + cellular proteinSide 1 = ADP + phosphate + cellular proteinSide 2.. Its function is as follows. Part of the Sec protein translocase complex. Interacts with the SecYEG preprotein conducting channel. Has a central role in coupling the hydrolysis of ATP to the transfer of proteins into and across the cell membrane, serving as an ATP-driven molecular motor driving the stepwise translocation of polypeptide chains across the membrane. In Pediococcus pentosaceus (strain ATCC 25745 / CCUG 21536 / LMG 10740 / 183-1w), this protein is Protein translocase subunit SecA 2.